The chain runs to 371 residues: tRNA-specific 2-thiouridylase MnmA (371 aa).

ATP-binding positions include 13-20 and Met-39; that span reads GMSGGVDS. The tract at residues 99–101 is interaction with target base in tRNA; it reads NPD. The active-site Nucleophile is Cys-104. The cysteines at positions 104 and 200 are disulfide-linked. Gly-128 provides a ligand contact to ATP. The interval 150-152 is interaction with tRNA; that stretch reads KDQ. Residue Cys-200 is the Cysteine persulfide intermediate of the active site. Residues 308–309 form an interaction with tRNA region; it reads RY.

This sequence belongs to the MnmA/TRMU family.

The protein resides in the cytoplasm. It carries out the reaction S-sulfanyl-L-cysteinyl-[protein] + uridine(34) in tRNA + AH2 + ATP = 2-thiouridine(34) in tRNA + L-cysteinyl-[protein] + A + AMP + diphosphate + H(+). Catalyzes the 2-thiolation of uridine at the wobble position (U34) of tRNA, leading to the formation of s(2)U34. The protein is tRNA-specific 2-thiouridylase MnmA of Listeria monocytogenes serotype 4a (strain HCC23).